The primary structure comprises 326 residues: Tetraacyldisaccharide 4'-kinase (326 aa).

Residue 52-59 (TLGGAGKT) coordinates ATP.

This sequence belongs to the LpxK family.

It catalyses the reaction a lipid A disaccharide + ATP = a lipid IVA + ADP + H(+). It functions in the pathway glycolipid biosynthesis; lipid IV(A) biosynthesis; lipid IV(A) from (3R)-3-hydroxytetradecanoyl-[acyl-carrier-protein] and UDP-N-acetyl-alpha-D-glucosamine: step 6/6. Functionally, transfers the gamma-phosphate of ATP to the 4'-position of a tetraacyldisaccharide 1-phosphate intermediate (termed DS-1-P) to form tetraacyldisaccharide 1,4'-bis-phosphate (lipid IVA). The sequence is that of Tetraacyldisaccharide 4'-kinase from Methylobacterium radiotolerans (strain ATCC 27329 / DSM 1819 / JCM 2831 / NBRC 15690 / NCIMB 10815 / 0-1).